The chain runs to 458 residues: Brassinosteroid-related acyltransferase 1 (458 aa).

His164 functions as the Proton acceptor in the catalytic mechanism.

Belongs to the plant acyltransferase family. Highly expressed in young tissues and vascular bundles. Mostly expressed in young leaves, primary roots, flowers (including petals and sepals), and siliques.

The protein localises to the endoplasmic reticulum. It is found in the nucleus. It functions in the pathway plant hormone biosynthesis; brassinosteroid biosynthesis. In terms of biological role, brassinosteroids (BR) acyltransferase with acyl-CoA ligase activity toward brassinolide (BL), castasterone (CS), typhasterol (TY), 6-deoxotyphasterol (6-deoxoTY), and 6-deoxocastasterone (6-deoxoCS) and thus converts them to corresponding lauroyl esters. Regulates BR homeostasis and promotes BR-mediated cell growth regulation. Involved in vascular bundle development. This chain is Brassinosteroid-related acyltransferase 1, found in Arabidopsis thaliana (Mouse-ear cress).